A 278-amino-acid polypeptide reads, in one-letter code: Putative cysteine-rich repeat secretory protein 19 (278 aa).

An N-terminal signal peptide occupies residues 1 to 32 (MYSSSSVSKRFVLVPIVVVVTTQLLLVRNVSS). 2 consecutive Gnk2-homologous domains span residues 39-147 (YLHH…SLDT) and 160-267 (PSAK…LYPF).

This sequence belongs to the cysteine-rich repeat secretory protein family.

It localises to the secreted. This chain is Putative cysteine-rich repeat secretory protein 19 (CRRSP19), found in Arabidopsis thaliana (Mouse-ear cress).